Reading from the N-terminus, the 224-residue chain is UPF0758 protein BPUM_2444 (224 aa).

The MPN domain occupies 102–224; that stretch reads VIRTPEDGAN…FVSLKEKGYL (123 aa). 3 residues coordinate Zn(2+): His173, His175, and Asp186. The JAMM motif motif lies at 173-186; sequence HNHPSGDPTPSRED.

Belongs to the UPF0758 family.

The protein is UPF0758 protein BPUM_2444 of Bacillus pumilus (strain SAFR-032).